Reading from the N-terminus, the 360-residue chain is MSQERPTFYRQELNKTIWEVPERYQNLSPVGSGAYGSVCAAFDTKTGLRVAVKKLSRPFQSIIHAKRTYRELRLLKHMKHENVIGLLDVFTPARSLEEFNDVYLVTHLMGADLNNIVKCQKLTDDHVQFLIYQILRGLKYIHSADIIHRDLKPSNLAVNEDCELKILDFGLARHTDDEMTGYVATRWYRAPEIMLNWMHYNQTVDIWSVGCIMAELLTGRTLFPGTDHIDQLKLILRLVGTPGAELLKKISSESARNYIQSLTQMPKMNFANVFIGANPLAVDLLEKMLVLDSDKRITAAQALAHAYFAQYHDPDDEPVADPYDQSFESRDLLIDEWKSLTYDEVISFVPPPLDQEEMES.

At serine 2 the chain carries N-acetylserine. Position 2 is a phosphoserine (serine 2). Residue threonine 16 is modified to Phosphothreonine. The Protein kinase domain maps to 24–308 (YQNLSPVGSG…AAQALAHAYF (285 aa)). ATP contacts are provided by residues 30-38 (VGSGAYGSV) and lysine 53. Residues lysine 53 and lysine 152 each carry the N6-acetyllysine modification. Aspartate 168 (proton acceptor) is an active-site residue. Phosphothreonine; by MAP2K3, MAP2K4, MAP2K6 and autocatalysis is present on threonine 180. The short motif at 180–182 (TGY) is the TXY element. At tyrosine 182 the chain carries Phosphotyrosine; by MAP2K3, MAP2K4, MAP2K6 and autocatalysis. At threonine 263 the chain carries Phosphothreonine. A Phosphotyrosine; by ZAP70 modification is found at tyrosine 323.

It belongs to the protein kinase superfamily. CMGC Ser/Thr protein kinase family. MAP kinase subfamily. In terms of assembly, component of a signaling complex containing at least AKAP13, PKN1, MAPK14, ZAK and MAP2K3. Within this complex, AKAP13 interacts directly with PKN1, which in turn recruits MAPK14, MAP2K3 and ZAK. Binds to a kinase interaction motif within the protein tyrosine phosphatase, PTPRR. This interaction retains MAPK14 in the cytoplasm and prevents nuclear accumulation. Interacts with SPAG9 and GADD45A. Interacts with CDC25B, CDC25C, DUSP1, DUSP10, DUSP16, NP60, SUPT20H and TAB1. Interacts with casein kinase II subunits CSNK2A1 and CSNK2B. Interacts with PPM1D. Interacts with CDK5RAP3; recruits PPM1D to MAPK14 and may regulate its dephosphorylation. Interacts with DUSP2; this interaction does not lead to catalytic activation of DUSP2 and dephosphrylation of MAPK14. Requires Mg(2+) as cofactor. In terms of processing, dually phosphorylated on Thr-180 and Tyr-182 by the MAP2Ks MAP2K3/MKK3, MAP2K4/MKK4 and MAP2K6/MKK6 in response to inflammatory citokines, environmental stress or growth factors, which activates the enzyme. Dual phosphorylation can also be mediated by TAB1-mediated autophosphorylation. TCR engagement in T-cells also leads to Tyr-323 phosphorylation by ZAP70. Dephosphorylated and inactivated by DUPS1, DUSP10 and DUSP16. PPM1D also mediates dephosphorylation and inactivation of MAPK14. Post-translationally, acetylated at Lys-53 and Lys-152 by KAT2B and EP300. Acetylation at Lys-53 increases the affinity for ATP and enhances kinase activity. Lys-53 and Lys-152 are deacetylated by HDAC3. Ubiquitinated. Ubiquitination leads to degradation by the proteasome pathway. In terms of tissue distribution, brain, heart, placenta, pancreas and skeletal muscle. Expressed to a lesser extent in lung, liver and kidney.

It is found in the cytoplasm. The protein localises to the nucleus. It catalyses the reaction L-seryl-[protein] + ATP = O-phospho-L-seryl-[protein] + ADP + H(+). The catalysed reaction is L-threonyl-[protein] + ATP = O-phospho-L-threonyl-[protein] + ADP + H(+). With respect to regulation, activated by cell stresses such as DNA damage, heat shock, osmotic shock, anisomycin and sodium arsenite, as well as pro-inflammatory stimuli such as bacterial lipopolysaccharide (LPS) and interleukin-1. Activation occurs through dual phosphorylation of Thr-180 and Tyr-182 by either of two dual specificity kinases, MAP2K3/MKK3 or MAP2K6/MKK6, and potentially also MAP2K4/MKK4, as well as by TAB1-mediated autophosphorylation. MAPK14 phosphorylated on both Thr-180 and Tyr-182 is 10-20-fold more active than MAPK14 phosphorylated only on Thr-180, whereas MAPK14 phosphorylated on Tyr-182 alone is inactive. whereas Thr-180 is necessary for catalysis, Tyr-182 may be required for auto-activation and substrate recognition. Phosphorylated at Tyr-323 by ZAP70 in an alternative activation pathway in response to TCR signaling in T-cells. This alternative pathway is inhibited by GADD45A. Inhibited by dual specificity phosphatases, such as DUSP1, DUSP10, and DUSP16. Specifically inhibited by the binding of pyridinyl-imidazole compounds, which are cytokine-suppressive anti-inflammatory drugs (CSAID). Isoform Mxi2 is 100-fold less sensitive to these agents than the other isoforms and is not inhibited by DUSP1. Isoform Exip is not activated by MAP2K6. SB203580 is an inhibitor of MAPK14. Its function is as follows. Serine/threonine kinase which acts as an essential component of the MAP kinase signal transduction pathway. MAPK14 is one of the four p38 MAPKs which play an important role in the cascades of cellular responses evoked by extracellular stimuli such as pro-inflammatory cytokines or physical stress leading to direct activation of transcription factors. Accordingly, p38 MAPKs phosphorylate a broad range of proteins and it has been estimated that they may have approximately 200 to 300 substrates each. Some of the targets are downstream kinases which are activated through phosphorylation and further phosphorylate additional targets. RPS6KA5/MSK1 and RPS6KA4/MSK2 can directly phosphorylate and activate transcription factors such as CREB1, ATF1, the NF-kappa-B isoform RELA/NFKB3, STAT1 and STAT3, but can also phosphorylate histone H3 and the nucleosomal protein HMGN1. RPS6KA5/MSK1 and RPS6KA4/MSK2 play important roles in the rapid induction of immediate-early genes in response to stress or mitogenic stimuli, either by inducing chromatin remodeling or by recruiting the transcription machinery. On the other hand, two other kinase targets, MAPKAPK2/MK2 and MAPKAPK3/MK3, participate in the control of gene expression mostly at the post-transcriptional level, by phosphorylating ZFP36 (tristetraprolin) and ELAVL1, and by regulating EEF2K, which is important for the elongation of mRNA during translation. MKNK1/MNK1 and MKNK2/MNK2, two other kinases activated by p38 MAPKs, regulate protein synthesis by phosphorylating the initiation factor EIF4E2. MAPK14 also interacts with casein kinase II, leading to its activation through autophosphorylation and further phosphorylation of TP53/p53. In the cytoplasm, the p38 MAPK pathway is an important regulator of protein turnover. For example, CFLAR is an inhibitor of TNF-induced apoptosis whose proteasome-mediated degradation is regulated by p38 MAPK phosphorylation. In a similar way, MAPK14 phosphorylates the ubiquitin ligase SIAH2, regulating its activity towards EGLN3. MAPK14 may also inhibit the lysosomal degradation pathway of autophagy by interfering with the intracellular trafficking of the transmembrane protein ATG9. Another function of MAPK14 is to regulate the endocytosis of membrane receptors by different mechanisms that impinge on the small GTPase RAB5A. In addition, clathrin-mediated EGFR internalization induced by inflammatory cytokines and UV irradiation depends on MAPK14-mediated phosphorylation of EGFR itself as well as of RAB5A effectors. Ectodomain shedding of transmembrane proteins is regulated by p38 MAPKs as well. In response to inflammatory stimuli, p38 MAPKs phosphorylate the membrane-associated metalloprotease ADAM17. Such phosphorylation is required for ADAM17-mediated ectodomain shedding of TGF-alpha family ligands, which results in the activation of EGFR signaling and cell proliferation. Another p38 MAPK substrate is FGFR1. FGFR1 can be translocated from the extracellular space into the cytosol and nucleus of target cells, and regulates processes such as rRNA synthesis and cell growth. FGFR1 translocation requires p38 MAPK activation. In the nucleus, many transcription factors are phosphorylated and activated by p38 MAPKs in response to different stimuli. Classical examples include ATF1, ATF2, ATF6, ELK1, PTPRH, DDIT3, TP53/p53 and MEF2C and MEF2A. The p38 MAPKs are emerging as important modulators of gene expression by regulating chromatin modifiers and remodelers. The promoters of several genes involved in the inflammatory response, such as IL6, IL8 and IL12B, display a p38 MAPK-dependent enrichment of histone H3 phosphorylation on 'Ser-10' (H3S10ph) in LPS-stimulated myeloid cells. This phosphorylation enhances the accessibility of the cryptic NF-kappa-B-binding sites marking promoters for increased NF-kappa-B recruitment. Phosphorylates CDC25B and CDC25C which is required for binding to 14-3-3 proteins and leads to initiation of a G2 delay after ultraviolet radiation. Phosphorylates TIAR following DNA damage, releasing TIAR from GADD45A mRNA and preventing mRNA degradation. The p38 MAPKs may also have kinase-independent roles, which are thought to be due to the binding to targets in the absence of phosphorylation. Protein O-Glc-N-acylation catalyzed by the OGT is regulated by MAPK14, and, although OGT does not seem to be phosphorylated by MAPK14, their interaction increases upon MAPK14 activation induced by glucose deprivation. This interaction may regulate OGT activity by recruiting it to specific targets such as neurofilament H, stimulating its O-Glc-N-acylation. Required in mid-fetal development for the growth of embryo-derived blood vessels in the labyrinth layer of the placenta. Also plays an essential role in developmental and stress-induced erythropoiesis, through regulation of EPO gene expression. Isoform MXI2 activation is stimulated by mitogens and oxidative stress and only poorly phosphorylates ELK1 and ATF2. Isoform EXIP may play a role in the early onset of apoptosis. Phosphorylates S100A9 at 'Thr-113'. Phosphorylates NLRP1 downstream of MAP3K20/ZAK in response to UV-B irradiation and ribosome collisions, promoting activation of the NLRP1 inflammasome and pyroptosis. Functionally, (Microbial infection) Activated by phosphorylation by M.tuberculosis EsxA in T-cells leading to inhibition of IFN-gamma production; phosphorylation is apparent within 15 minutes and is inhibited by kinase-specific inhibitors SB203580 and siRNA. In Homo sapiens (Human), this protein is Mitogen-activated protein kinase 14.